The primary structure comprises 133 residues: Small ribosomal subunit protein uS12 (133 aa).

Aspartate 89 bears the 3-methylthioaspartic acid mark. The interval aspartate 103–lysine 133 is disordered. Basic residues predominate over residues threonine 111–lysine 123. A compositionally biased stretch (low complexity) spans proline 124 to lysine 133.

Belongs to the universal ribosomal protein uS12 family. As to quaternary structure, part of the 30S ribosomal subunit. Contacts proteins S8 and S17. May interact with IF1 in the 30S initiation complex.

With S4 and S5 plays an important role in translational accuracy. Functionally, interacts with and stabilizes bases of the 16S rRNA that are involved in tRNA selection in the A site and with the mRNA backbone. Located at the interface of the 30S and 50S subunits, it traverses the body of the 30S subunit contacting proteins on the other side and probably holding the rRNA structure together. The combined cluster of proteins S8, S12 and S17 appears to hold together the shoulder and platform of the 30S subunit. This Bacteroides thetaiotaomicron (strain ATCC 29148 / DSM 2079 / JCM 5827 / CCUG 10774 / NCTC 10582 / VPI-5482 / E50) protein is Small ribosomal subunit protein uS12.